The sequence spans 223 residues: DNA-directed RNA polymerase III subunit RPC7 (223 aa).

The disordered stretch occupies residues 110-223 (MMPRNKCKKA…SDDNMDEATY (114 aa)). The span at 114–125 (NKCKKAGPKPKK) shows a compositional bias: basic residues. A Phosphothreonine modification is found at T133. Residues 140–155 (DVLKKMEELEKRGDGE) show a composition bias toward basic and acidic residues. A Phosphoserine modification is found at S157. Basic and acidic residues predominate over residues 164 to 173 (KEGSKEKSKE). Composition is skewed to acidic residues over residues 174–198 (GDDDDDDDAAEQEEYDEEEQEEEND) and 205–223 (EDGDDFGADSDDNMDEATY).

The protein belongs to the eukaryotic RPC7 RNA polymerase subunit family. As to quaternary structure, component of the RNA polymerase III complex consisting of 17 subunits: a ten-subunit horseshoe-shaped catalytic core composed of POLR3A/RPC1, POLR3B/RPC2, POLR1C/RPAC1, POLR1D/RPAC2, POLR3K/RPC10, POLR2E/RPABC1, POLR2F/RPABC2, POLR2H/RPABC3, POLR2K/RPABC4 and POLR2L/RPABC5; a mobile stalk composed of two subunits POLR3H/RPC8 and CRCP/RPC9, protruding from the core and functioning primarily in transcription initiation; and additional subunits homologous to general transcription factors of the RNA polymerase II machinery, POLR3C/RPC3-POLR3F/RPC6-POLR3G/RPC7 heterotrimer required for transcription initiation and POLR3D/RPC4-POLR3E/RPC5 heterodimer involved in both transcription initiation and termination. Directly interacts with POLR3C/RPC62. Also found in a trimeric complex with POLR3C/RPC3 and POLR3GL. Barely detectable in differentiated tissues. Expressed in embryonic stem cells and in other dividing cells, such as some tumor cell lines.

The protein resides in the nucleus. Its subcellular location is the cytoplasm. Its function is as follows. DNA-dependent RNA polymerase catalyzes the transcription of DNA into RNA using the four ribonucleoside triphosphates as substrates. Specific peripheric component of RNA polymerase III (Pol III) which synthesizes small non-coding RNAs including 5S rRNA, snRNAs, tRNAs and miRNAs from at least 500 distinct genomic loci. Acts as a long tether that bridges POLR3C/RPC3-POLR3F/RPC6-POLR3G/RPC7 heterotrimer and the mobile stalk of Pol III, coordinating the dynamics of Pol III stalk and clamp modules during the transition from apo to elongation state. Pol III exists as two alternative complexes defined by the mutually exclusive incorporation of subunit POLR3G/RPC7alpha or POLR3GL/RPC7beta. POLR3G/RPC7alpha modulates Pol III transcriptome by specifically enhancing the transcription of snaR-A non-coding RNAs. At resting state, occupies the active site of apo Pol III and keeps Pol III in an autoinhibitory mode, preventing non-specific transcription. Pol III plays a key role in sensing and limiting infection by intracellular bacteria and DNA viruses. Acts as a nuclear and cytosolic DNA sensor involved in innate immune response. Can sense non-self dsDNA that serves as template for transcription into dsRNA. The non-self RNA polymerase III transcripts, such as Epstein-Barr virus-encoded RNAs (EBERs), induce type I interferon and NF-kappa-B through the RIG-I pathway. The chain is DNA-directed RNA polymerase III subunit RPC7 from Homo sapiens (Human).